The following is a 61-amino-acid chain: Transcription elongation factor Spt4 (61 aa).

Residues Cys6, Cys9, Cys18, and Cys21 each contribute to the Zn(2+) site.

Belongs to the archaeal Spt4 family. As to quaternary structure, heterodimer composed of Spt4 and Spt5.

In terms of biological role, stimulates transcription elongation. This Pyrococcus furiosus (strain ATCC 43587 / DSM 3638 / JCM 8422 / Vc1) protein is Transcription elongation factor Spt4.